Here is a 231-residue protein sequence, read N- to C-terminus: Thrombin-like enzyme leucurobin (231 aa).

Residues 1–223 (VIGGDECDIN…YLPWIQSIIA (223 aa)) form the Peptidase S1 domain. 6 disulfide bridges follow: C7/C139, C26/C42, C74/C230, C118/C184, C150/C163, and C174/C199. Catalysis depends on charge relay system residues H41 and D86. N146 carries N-linked (GlcNAc...) asparagine glycosylation. The active-site Charge relay system is S178. The N-linked (GlcNAc...) asparagine glycan is linked to N225.

This sequence belongs to the peptidase S1 family. Snake venom subfamily. Monomer. Glycosylated. Expressed by the venom gland.

Its subcellular location is the secreted. The enzyme catalyses Selective cleavage of Arg-|-Xaa bond in fibrinogen, to form fibrin, and release fibrinopeptide A. The specificity of further degradation of fibrinogen varies with species origin of the enzyme.. Inhibited by PMSF and benzamidine. Its clotting effect is strongly inhibited by antibothropic serum. Is not inhibited by heparin. Its function is as follows. Thrombin-like snake venom serine protease that cleaves Arg-Gly bonds in alpha-chain of fibrinogen (FGA). Induces temporary episodes of opisthotonos and rapid rolling around the long axis of the animal (gyroxin-like effect), when injected into the tail veins of mice (0.143 ug/g mouse). The protein is Thrombin-like enzyme leucurobin of Bothrops leucurus (Whitetail lancehead).